We begin with the raw amino-acid sequence, 340 residues long: Zinc finger protein 488 (340 aa).

Positions 72–187 (AELALLVAPG…SVFPAGESAD (116 aa)) are important for transcriptional repression activity. The tract at residues 77 to 180 (LVAPGKPRPG…AERPELTSVF (104 aa)) is disordered. The span at 82–91 (KPRPGKPLPP) shows a compositional bias: pro residues. Over residues 106–125 (PRMKDRQVDAQAQEREHDDP) the composition is skewed to basic and acidic residues. 2 C2H2-type zinc fingers span residues 275 to 302 (NWCA…KKEH) and 317 to 339 (LACP…MTSH). Residues 298–305 (HKKEHAGP) carry the Nuclear localization signal motif.

This sequence belongs to the krueppel C2H2-type zinc-finger protein family. In terms of assembly, interacts with OLIG2.

The protein localises to the nucleus. In terms of biological role, transcriptional repressor. Plays a role in oligodendrocyte differentiation, together with OLIG2. Mediates Notch signaling-activated formation of oligodendrocyte precursors. Promotes differentiation of adult neural stem progenitor cells (NSPCs) into mature oligodendrocytes and contributes to remyelination following nerve injury. This is Zinc finger protein 488 (ZNF488) from Homo sapiens (Human).